The sequence spans 160 residues: Putative pre-16S rRNA nuclease (160 aa).

This sequence belongs to the YqgF nuclease family.

The protein localises to the cytoplasm. Functionally, could be a nuclease involved in processing of the 5'-end of pre-16S rRNA. The sequence is that of Putative pre-16S rRNA nuclease from Jannaschia sp. (strain CCS1).